Reading from the N-terminus, the 106-residue chain is Large ribosomal subunit protein uL24 (106 aa).

It belongs to the universal ribosomal protein uL24 family. In terms of assembly, part of the 50S ribosomal subunit.

In terms of biological role, one of two assembly initiator proteins, it binds directly to the 5'-end of the 23S rRNA, where it nucleates assembly of the 50S subunit. Its function is as follows. One of the proteins that surrounds the polypeptide exit tunnel on the outside of the subunit. This is Large ribosomal subunit protein uL24 from Blochmanniella floridana.